A 430-amino-acid polypeptide reads, in one-letter code: Acetyl-CoA acetyltransferase FG05087, mitochondrial (430 aa).

The N-terminal 32 residues, 1 to 32 (MTVTQLRSAGRLAQLAGHVNGARQFSTRPALR), are a transit peptide targeting the mitochondrion. Catalysis depends on cysteine 122, which acts as the Acyl-thioester intermediate. Tyrosine 217 serves as a coordination point for K(+). Lysine 260 provides a ligand contact to CoA. Alanine 278 is a K(+) binding site. Serine 282 is a CoA binding site. Catalysis depends on proton acceptor residues histidine 385 and cysteine 413. Asparagine 414 serves as a coordination point for chloride.

It belongs to the thiolase-like superfamily. Thiolase family. Homotetramer. K(+) serves as cofactor.

Its subcellular location is the mitochondrion. It carries out the reaction 2 acetyl-CoA = acetoacetyl-CoA + CoA. Functionally, mitochondrial acetyl-CoA acetyltransferase that catalyzes both the formation and degradation of acetoacetyl-CoA. Seems not to be involved in ergosterol biosynthesis. Plays an important role in growth, morphogenesis and maintaining mitochondrial function including the response to oxidative stresses. The polypeptide is Acetyl-CoA acetyltransferase FG05087, mitochondrial (Gibberella zeae (strain ATCC MYA-4620 / CBS 123657 / FGSC 9075 / NRRL 31084 / PH-1) (Wheat head blight fungus)).